We begin with the raw amino-acid sequence, 463 residues long: Bifunctional protein HldE (463 aa).

Residues 1-311 (MKQILVVGDL…EEIALILNQT (311 aa)) form a ribokinase region. 191–194 (NRIE) contacts ATP. D260 is an active-site residue. The cytidylyltransferase stretch occupies residues 334–463 (FTNGCFDILH…IERIKRTCND (130 aa)).

The protein in the N-terminal section; belongs to the carbohydrate kinase PfkB family. It in the C-terminal section; belongs to the cytidylyltransferase family. As to quaternary structure, homodimer.

It catalyses the reaction D-glycero-beta-D-manno-heptose 7-phosphate + ATP = D-glycero-beta-D-manno-heptose 1,7-bisphosphate + ADP + H(+). The enzyme catalyses D-glycero-beta-D-manno-heptose 1-phosphate + ATP + H(+) = ADP-D-glycero-beta-D-manno-heptose + diphosphate. It functions in the pathway nucleotide-sugar biosynthesis; ADP-L-glycero-beta-D-manno-heptose biosynthesis; ADP-L-glycero-beta-D-manno-heptose from D-glycero-beta-D-manno-heptose 7-phosphate: step 1/4. Its pathway is nucleotide-sugar biosynthesis; ADP-L-glycero-beta-D-manno-heptose biosynthesis; ADP-L-glycero-beta-D-manno-heptose from D-glycero-beta-D-manno-heptose 7-phosphate: step 3/4. Its function is as follows. Catalyzes the phosphorylation of D-glycero-D-manno-heptose 7-phosphate at the C-1 position to selectively form D-glycero-beta-D-manno-heptose-1,7-bisphosphate. Functionally, catalyzes the ADP transfer from ATP to D-glycero-beta-D-manno-heptose 1-phosphate, yielding ADP-D-glycero-beta-D-manno-heptose. The polypeptide is Bifunctional protein HldE (Helicobacter pylori (strain Shi470)).